The following is a 1208-amino-acid chain: Calmodulin-binding transcription activator 2 (1208 aa).

The CG-1 DNA-binding region spans 30–160 (RCPLLPPERL…YLNVPALEDC (131 aa)). Residues 78-86 (NRKKVKYRK) carry the Nuclear localization signal motif. Disordered regions lie at residues 269–328 (ISHS…SRGG), 366–418 (VGSE…PCPA), and 437–507 (QLGA…ELEP). Over residues 275-288 (PEPPPLIAPLPPEL) the composition is skewed to pro residues. Low complexity-rich tracts occupy residues 294 to 305 (SPSSSSSSSSSS) and 319 to 328 (TSRGGSSRGG). Pro residues-rich tracts occupy residues 371 to 380 (SAPPAPPSPA) and 464 to 476 (TVPP…PSSP). The IPT/TIG domain maps to 544-622 (DFSPEWSYPE…LSASVLFEYR (79 aa)). 3 ANK repeats span residues 717–750 (RGMS…SLDL), 762–792 (FSCT…ALSI), and 796–826 (LGRL…ELSV). Disordered stretches follow at residues 826–881 (VEHP…ASDI) and 908–936 (NSKE…DSPP). Positions 829-853 (PLALSPPSSSPDTGLSSASSPSELS) are enriched in low complexity. 2 IQ domains span residues 1054–1083 (LYEA…AAAV) and 1107–1136 (MTQA…AAVL). Residues 1144–1166 (YRRRPGPPHRPSGPLPARNKGTF) form a disordered region.

Belongs to the CAMTA family. In terms of assembly, may interact with calmodulin.

It is found in the nucleus. Functionally, transcription activator. May act as tumor suppressor. This is Calmodulin-binding transcription activator 2 (Camta2) from Mus musculus (Mouse).